Consider the following 146-residue polypeptide: Ninjurin-1 (146 aa).

Residues Met-1–Leu-33 are disordered. The Extracellular portion of the chain corresponds to Met-1 to Ile-75. The segment at His-37–Glu-66 is required to induce plasma membrane rupture. Residues Lys-41–Ala-52 are helix alpha1. The tract at residues Met-55–Phe-71 is helix alpha2. N-linked (GlcNAc...) asparagine glycosylation occurs at Asn-57. The helical transmembrane segment at Pro-76–Lys-100 threads the bilayer. Over Trp-101 to Tyr-110 the chain is Cytoplasmic. Residues Ile-111 to Ala-135 form a helical membrane-spanning segment. At Phe-136–Ser-146 the chain is on the extracellular side.

The protein belongs to the ninjurin family. Homooligomer; in response to death stimuli, homooligomerizes into long, highly branched filaments and large, ring-shaped structures in the membrane. In terms of assembly, homodimer; in absence of death stimuli, forms an inactive homodimer. Homooligomer; in response to death stimuli, homooligomerizes into long, highly branched filaments and large, ring-shaped structures in the membrane.

It localises to the cell membrane. The protein resides in the synaptic cell membrane. Its activity is regulated as follows. In normal conditions, NINJ1 is inactivated. In response to death stimuli, homooligomerizes and disrupts membrane integrity by introducing the hydrophilic faces of alpha1 and alpha2 helices into the hydrophobic membrane. Homooligomerization and ability to mediate plasma membrane rupture is inhibited by glycine; it is unclear whether glycine directly or indirectly inhibits homooligomerization. In response to death stimuli, homooligomerizes and disrupts membrane integrity by introducing the hydrophilic faces of alpha1 and alpha2 helices into the hydrophobic membrane. Homooligomerization and ability to mediate plasma membrane rupture is inhibited by glycine; it is unclear whether glycine directly or indirectly inhibits homooligomerization. In normal conditions, NINJ1 is autoinhibited via formation of a homodimer: in the inactive homodimer, the alpha1 and alpha2 helices (residues 41-71) form a single transmembrane region without a kink, in which hydrophilic faces of alpha1 and alpha2 helices are sequestered. Effector of various programmed cell death, such as pyroptosis and necroptosis, which mediates plasma membrane rupture (cytolysis). Oligomerizes in response to death stimuli and forms ring-like structures on the plasma membrane: acts by cutting and shedding membrane disks, like a cookie cutter, leading to membrane damage and loss that cannot be repaired by the cell. Plasma membrane rupture leads to release intracellular molecules named damage-associated molecular patterns (DAMPs) that propagate the inflammatory response. Mechanistically, mediates plasma membrane rupture by introducing hydrophilic faces of 2 alpha helices into the hydrophobic membrane. Induces plasma membrane rupture downstream of Gasdermin (GSDMA, GSDMB, GSDMC, GSDMD, or GSDME) or MLKL during pyroptosis or necroptosis, respectively. Also acts as an effector of PANoptosis and ferroptosis. Induces plasma membrane rupture in response to cell swelling caused by osmotic stress. Acts as a regulator of Toll-like receptor 4 (TLR4) signaling triggered by lipopolysaccharide (LPS) during systemic inflammation; directly binds LPS. Involved in leukocyte migration during inflammation by promoting transendothelial migration of macrophages via homotypic binding. Promotes the migration of monocytes across the brain endothelium to central nervous system inflammatory lesions. Also acts as a homophilic transmembrane adhesion molecule involved in various processes such as axonal growth, cell chemotaxis and angiogenesis. Promotes cell adhesion by mediating homophilic interactions via its extracellular N-terminal adhesion motif (N-NAM). Also involved in striated muscle growth and differentiation. The sequence is that of Ninjurin-1 from Danio rerio (Zebrafish).